The sequence spans 310 residues: Ornithine carbamoyltransferase (310 aa).

Carbamoyl phosphate is bound by residues 57–60 (STRT), Gln84, Arg108, and 135–138 (HPCQ). L-ornithine is bound by residues Asn166, Asp229, and 233–234 (SM). Carbamoyl phosphate-binding positions include 269–270 (CL) and Arg297.

The protein belongs to the aspartate/ornithine carbamoyltransferase superfamily. OTCase family.

It localises to the cytoplasm. The enzyme catalyses carbamoyl phosphate + L-ornithine = L-citrulline + phosphate + H(+). It participates in amino-acid biosynthesis; L-arginine biosynthesis; L-arginine from L-ornithine and carbamoyl phosphate: step 1/3. Reversibly catalyzes the transfer of the carbamoyl group from carbamoyl phosphate (CP) to the N(epsilon) atom of ornithine (ORN) to produce L-citrulline. In Thermosynechococcus vestitus (strain NIES-2133 / IAM M-273 / BP-1), this protein is Ornithine carbamoyltransferase.